The chain runs to 1007 residues: Serine/threonine-protein kinase PRP4 homolog (1007 aa).

The span at 1 to 10 shows a compositional bias: polar residues; the sequence is MAAAETQSLR. A disordered region spans residues 1–99; the sequence is MAAAETQSLR…EGMSPAKRTK (99 aa). Position 2 is an N-acetylalanine (alanine 2). Residues serine 8, serine 20, serine 23, and serine 32 each carry the phosphoserine modification. Composition is skewed to basic residues over residues 39-59 and 67-81; these read KHSRHKKKKHKHRSKHKKHKH and KKHKHKHKHKKHKRK. The span at 82-91 shows a compositional bias: basic and acidic residues; that stretch reads EIIDASDKEG. Phosphoserine is present on residues serine 87 and serine 93. An N6-acetyllysine; alternate modification is found at lysine 99. A Glycyl lysine isopeptide (Lys-Gly) (interchain with G-Cter in SUMO2); alternate cross-link involves residue lysine 99. Lysine 111 is covalently cross-linked (Glycyl lysine isopeptide (Lys-Gly) (interchain with G-Cter in SUMO2)). A Glycyl lysine isopeptide (Lys-Gly) (interchain with G-Cter in SUMO2); alternate cross-link involves residue lysine 117. Lysine 117 participates in a covalent cross-link: Glycyl lysine isopeptide (Lys-Gly) (interchain with G-Cter in SUMO1); alternate. Position 131 is a phosphoserine (serine 131). A Phosphotyrosine modification is found at tyrosine 140. Disordered stretches follow at residues 140–533 and 559–583; these read YESG…EEED and SNMSVPSEPSSPQSSTRTRSPSPDD. A phosphoserine mark is found at serine 142, serine 144, and serine 166. A compositionally biased stretch (low complexity) spans 157–168; that stretch reads GNRSSTRSSSTK. Glycyl lysine isopeptide (Lys-Gly) (interchain with G-Cter in SUMO2) cross-links involve residues lysine 170 and lysine 177. Composition is skewed to basic residues over residues 179 to 202 and 214 to 230; these read TTKKRSKSRSKERTRHRSDKKKSK and RSKSKERKKSKSPSKRS. Phosphoserine is present on residues serine 239, serine 241, serine 257, serine 277, serine 283, serine 292, and serine 294. The span at 247–270 shows a compositional bias: basic and acidic residues; that stretch reads RSQEKIGKARSPTDDKVKIEDKSK. The segment covering 302–315 has biased composition (basic residues); that stretch reads SKDRRSRSKERKSK. Positions 316–325 are enriched in basic and acidic residues; it reads RSETDKEKKP. 5 positions are modified to phosphoserine: serine 328, serine 354, serine 356, serine 366, and serine 368. Positions 342–367 are enriched in basic residues; it reads PSRRPGRSPKRRSLSPKPRDKSRRSR. At threonine 385 the chain carries Phosphothreonine. Serine 387 carries the post-translational modification Phosphoserine. Composition is skewed to basic and acidic residues over residues 395–408 and 415–429; these read RSLERKRREPERRR and RPRDDILSRRERSKD. A phosphoserine mark is found at serine 427, serine 431, and serine 437. A compositionally biased stretch (basic residues) spans 438–497; that stretch reads PTRRRSRSPIRRRSRSPLRRSRSPRRRSRSPRRRDRGRRSRSRLRRRSRSRGGRRRRSRS. A phosphoserine mark is found at serine 518, serine 519, serine 520, serine 565, serine 569, serine 578, and serine 580. Over residues 518–533 the composition is skewed to acidic residues; that stretch reads SSSDDNLEDFDVEEED. Over residues 562 to 581 the composition is skewed to low complexity; that stretch reads SVPSEPSSPQSSTRTRSPSP. Glycyl lysine isopeptide (Lys-Gly) (interchain with G-Cter in SUMO2) cross-links involve residues lysine 593 and lysine 659. In terms of domain architecture, Protein kinase spans 687 to 1006; that stretch reads YNVYGYTGQG…ALQHAFIQEK (320 aa). ATP-binding positions include 693–701 and lysine 717; that span reads TGQGVFSNV. Residue lysine 717 is modified to N6-acetyllysine. Residue aspartate 815 is the Proton acceptor of the active site. Tyrosine 849 carries the post-translational modification Phosphotyrosine. At serine 852 the chain carries Phosphoserine.

This sequence belongs to the protein kinase superfamily. CMGC Ser/Thr protein kinase family. Interacts with CLK1 C-terminus. Associates with the U5 snRNP and NCOR1 deacetylase complexes. Identified in the spliceosome C complex. Post-translationally, phosphorylated by CLK1. Autophosphorylated; phosphorylation inhibits interaction with its targets, such as PRPF6 or SMARCA4. Ubiquitous.

Its subcellular location is the nucleus. It localises to the chromosome. The protein localises to the centromere. The protein resides in the kinetochore. It carries out the reaction L-seryl-[protein] + ATP = O-phospho-L-seryl-[protein] + ADP + H(+). The catalysed reaction is L-threonyl-[protein] + ATP = O-phospho-L-threonyl-[protein] + ADP + H(+). In terms of biological role, serine/threonine kinase involved in spliceosomal assembly as well as mitosis and signaling regulation. Connects chromatin mediated regulation of transcription and pre-mRNA splicing. During spliceosomal assembly, interacts with and phosphorylates PRPF6 and PRPF31, components of the U4/U6-U5 tri-small nuclear ribonucleoprotein (snRNP), to facilitate the formation of the spliceosome B complex. Plays a role in regulating transcription and the spindle assembly checkpoint (SAC). Associates with U5 snRNP and NCOR1 deacetylase complexes which may allow a coordination of pre-mRNA splicing with chromatin remodeling events involved in transcriptional regulation. Associates and probably phosphorylates SMARCA4 and NCOR1. Phosphorylates SRSF1. Associates with kinetochores during mitosis and is necessary for recruitment and maintenance of the checkpoint proteins such as MAD1L1 and MAD12L1 at the kinetochores. Phosphorylates and regulates the activity of the transcription factors such as ELK1 and KLF13. Phosphorylates nuclear YAP1 and WWTR1/TAZ which induces nuclear exclusion and regulates Hippo signaling pathway, involved in tissue growth control. The polypeptide is Serine/threonine-protein kinase PRP4 homolog (Homo sapiens (Human)).